Consider the following 215-residue polypeptide: MRTGIIAQKIGMTSVFNDKGERISLTLVKVDDCQVVGHKTLEKHGYNALVIGVKDKKISRVTKPMRQVFANAKISPKTKLKEFRISEENFIDIAASLEVDHFTAGQFVDITATTIGKGFAGSMKRHNFRGLEASHGVSISHRSHGSTGQRQDPGKVFKGKKMAGHMGCNKVTIQNLKIFAVDKERKLIMIQGSIPGHKNSYLSVKDAIKKISITV.

A disordered region spans residues 136 to 155 (GVSISHRSHGSTGQRQDPGK). N5-methylglutamine is present on Gln151.

It belongs to the universal ribosomal protein uL3 family. In terms of assembly, part of the 50S ribosomal subunit. Forms a cluster with proteins L14 and L19. Post-translationally, methylated by PrmB.

In terms of biological role, one of the primary rRNA binding proteins, it binds directly near the 3'-end of the 23S rRNA, where it nucleates assembly of the 50S subunit. This chain is Large ribosomal subunit protein uL3, found in Rickettsia conorii (strain ATCC VR-613 / Malish 7).